The chain runs to 115 residues: DNA-binding protein APE_1087b (115 aa).

Belongs to the PDCD5 family.

This chain is DNA-binding protein APE_1087b, found in Aeropyrum pernix (strain ATCC 700893 / DSM 11879 / JCM 9820 / NBRC 100138 / K1).